Consider the following 710-residue polypeptide: Early transcription factor 82 kDa subunit (710 aa).

The protein belongs to the poxviridae VETF large subunit family. Heterodimer of a 70 kDa and a 82 kDa subunit. Part of the early transcription complex composed of ETF, RAP94/OPG109, and the DNA-directed RNA polymerase.

The protein localises to the virion. Its function is as follows. Acts with RNA polymerase to initiate transcription from early gene promoters. Is recruited by the RPO-associated protein of 94 kDa RAP94/OPG109 to form the early transcription complex, which also contains the core RNA polymerase. ETF heterodimer binds to early gene promoters. The polypeptide is Early transcription factor 82 kDa subunit (OPG133) (Variola virus (isolate Human/India/Ind3/1967) (VARV)).